Reading from the N-terminus, the 145-residue chain is Major pollen allergen Ole e 1 (145 aa).

3 disulfide bridges follow: cysteine 19-cysteine 90, cysteine 22-cysteine 131, and cysteine 43-cysteine 78. The N-linked (GlcNAc...) (complex) asparagine; alternate glycan is linked to asparagine 111. Residue asparagine 111 is glycosylated (N-linked (GlcNAc...) (high mannose) asparagine; alternate).

It belongs to the Ole e I family. In terms of processing, N-glycosylated; contains high mannose (Man(7)-GlcNAc) and partially fucosylated complex glycans (GlcNAc-Man(3)-Xyl-GlcNAc). Complex glycans may contribute to the antigenicity. Exists both in a glycosylated and in a non-glycosylated form. Ole e 1 and Ole e 1.0103 are the only non-glycosylated isoallergens. A second potential glycosylation site exists at position 50 in cv. Bella de Espana and cv. Hojiblanca. As to expression, expressed in tapetum and pollen grains. Not detected in petals, roots or leaves.

It localises to the endoplasmic reticulum. The protein resides in the secreted. Its function is as follows. May be involved in recognition between pollen-stigma and pollen tube-style cells. The sequence is that of Major pollen allergen Ole e 1 from Olea europaea (Common olive).